Consider the following 254-residue polypeptide: Rho-related protein racD (254 aa).

Position 15 to 22 (15 to 22) interacts with GTP; it reads GDGAVGKT. The short motif at 37–45 is the Effector region element; that stretch reads YVPTVFDNF. GTP contacts are provided by residues 62–66 and 120–123; these read DTAGQ and TKTD. A compositionally biased stretch (low complexity) spans 186–231; it reads AVTSPTSKSSGKSSPSSTSSKPSKTTTTTTTSSSSSSPPAASTAKP. The disordered stretch occupies residues 186–254; the sequence is AVTSPTSKSS…KDKDEKKPAK (69 aa). A compositionally biased stretch (basic and acidic residues) spans 232-254; sequence AGEKKLSWGLFRKKDKDEKKPAK.

This sequence belongs to the small GTPase superfamily. Rho family.

The protein is Rho-related protein racD (racD) of Dictyostelium discoideum (Social amoeba).